A 205-amino-acid chain; its full sequence is MLSQCLSRTSRAVAGSNGHRFSKLSAIDGVHHAHPSPRRYTTFSSSDHADRTKRLLDAKEKAGLTYDKLASKLGITNTYAAQILLGQTKLSAATAAKLQAALPISEQDIEDMKSTYPMRGFDDEILKEPNVYRTYEAITHYGEAIKSIINEQCGDGIMSAIDFYCDVGTTTGVNGEKRVVITFNGKFLPHIEQKEEDNTAKSPRD.

Residues arginine 133, glutamate 136, and serine 159 contribute to the active site.

Belongs to the cyanase family.

The enzyme catalyses cyanate + hydrogencarbonate + 3 H(+) = NH4(+) + 2 CO2. Catalyzes the reaction of cyanate with bicarbonate to produce ammonia and carbon dioxide. The sequence is that of Cyanate hydratase from Thalassiosira pseudonana (Marine diatom).